Consider the following 103-residue polypeptide: Integration host factor subunit alpha (103 aa).

It belongs to the bacterial histone-like protein family. In terms of assembly, heterodimer of an alpha and a beta chain.

In terms of biological role, this protein is one of the two subunits of integration host factor, a specific DNA-binding protein that functions in genetic recombination as well as in transcriptional and translational control. This chain is Integration host factor subunit alpha, found in Aromatoleum aromaticum (strain DSM 19018 / LMG 30748 / EbN1) (Azoarcus sp. (strain EbN1)).